The sequence spans 441 residues: Queuine tRNA-ribosyltransferase accessory subunit 2 (441 aa).

Positions 307, 309, 312, and 338 each coordinate Zn(2+).

This sequence belongs to the queuine tRNA-ribosyltransferase family. QTRT2 subfamily. As to quaternary structure, heterodimer of a catalytic subunit and an accessory subunit. It depends on Zn(2+) as a cofactor.

It is found in the cytoplasm. Its function is as follows. Non-catalytic subunit of the queuine tRNA-ribosyltransferase (TGT) that catalyzes the base-exchange of a guanine (G) residue with queuine (Q) at position 34 (anticodon wobble position) in tRNAs with GU(N) anticodons (tRNA-Asp, -Asn, -His and -Tyr), resulting in the hypermodified nucleoside queuosine (7-(((4,5-cis-dihydroxy-2-cyclopenten-1-yl)amino)methyl)-7-deazaguanosine). This chain is Queuine tRNA-ribosyltransferase accessory subunit 2 (qtr2), found in Schizosaccharomyces pombe (strain 972 / ATCC 24843) (Fission yeast).